A 277-amino-acid chain; its full sequence is RNA-binding protein pno-1 (277 aa).

2 disordered regions span residues 1 to 52 (MATS…KLVK) and 72 to 100 (DEDA…GESR). The segment covering 8–27 (FDDELPMEEGMPELLDDEDV) has biased composition (acidic residues). Positions 30–40 (TLPSLLEQNLD) are enriched in polar residues. A compositionally biased stretch (acidic residues) spans 72–81 (DEDATADTAD). In terms of domain architecture, KH spans 198-250 (GDHVSRAIGRIAGKDGRTKLVIENTTKTRIVVANTKIHILGAYQNLKLARNAV).

Belongs to the PNO1 family. In terms of assembly, part of the small subunit (SSU) processome, composed of more than 70 proteins and the RNA chaperone small nucleolar RNA (snoRNA) U3.

The protein localises to the nucleus. Its subcellular location is the nucleolus. Functionally, part of the small subunit (SSU) processome, first precursor of the small eukaryotic ribosomal subunit. During the assembly of the SSU processome in the nucleolus, many ribosome biogenesis factors, an RNA chaperone and ribosomal proteins associate with the nascent pre-rRNA and work in concert to generate RNA folding, modifications, rearrangements and cleavage as well as targeted degradation of pre-ribosomal RNA by the RNA exosome. Positively regulates dimethylation of two adjacent adenosines in the loop of a conserved hairpin near the 3'-end of 18S rRNA. In Caenorhabditis elegans, this protein is RNA-binding protein pno-1.